Consider the following 575-residue polypeptide: MRLSRYYAPTLKETPAEAEVISHKLLLRAGMIRKLTAGIYTYLPLGLKALNNVAKIVREEMDRAGALEILMPAVQPADLWKESGRWDFYGRELLRFVDRHDRESCLGPTHEEVVTDLVRHEIRSYRQLPVNLYQIQTKFRDEIRPRFGLMRGREFVMKDAYSFDKDDSGADASYWGMYEAYARIFKRLGLKFRAVAADSGAIGGSFSHEFMVLADTGEDTIVACPACDYGANVEKAEAICPPAGDLAPCPAAEKIATPGQHTVEELAAFLKVPVASVIKTLLYVADGKTVAALVRGDRELNEVKFKNLLDAKEDLRLATPEEVTAATGAPVGFAGPVGLSLPVYADRELALANDWVVGANAADAHLLHVDLGRDANVVSYTDLREVAPGDPCPKCGALLDFTKGIEVGHVFKLGLKYSKALNATFLDEAGKEQFMIMGCYGIGVSRIVASAIEQNHDDGGIVFPPTIAPFEAALINLSPKDETACAKADEIYAALTAAGIETLLDDRDERPGVKFKDADLMGHPIQLTLGGKGLARGIVETKDRRTGEKGELPLEGFFEAFAAWRAGVREGWGLE.

The protein belongs to the class-II aminoacyl-tRNA synthetase family. ProS type 1 subfamily. Homodimer.

It localises to the cytoplasm. The enzyme catalyses tRNA(Pro) + L-proline + ATP = L-prolyl-tRNA(Pro) + AMP + diphosphate. In terms of biological role, catalyzes the attachment of proline to tRNA(Pro) in a two-step reaction: proline is first activated by ATP to form Pro-AMP and then transferred to the acceptor end of tRNA(Pro). As ProRS can inadvertently accommodate and process non-cognate amino acids such as alanine and cysteine, to avoid such errors it has two additional distinct editing activities against alanine. One activity is designated as 'pretransfer' editing and involves the tRNA(Pro)-independent hydrolysis of activated Ala-AMP. The other activity is designated 'posttransfer' editing and involves deacylation of mischarged Ala-tRNA(Pro). The misacylated Cys-tRNA(Pro) is not edited by ProRS. The chain is Proline--tRNA ligase from Solidesulfovibrio magneticus (strain ATCC 700980 / DSM 13731 / RS-1) (Desulfovibrio magneticus).